The sequence spans 792 residues: Probable exo-1,4-beta-xylosidase xlnD (792 aa).

The signal sequence occupies residues Met-1–Ala-20. 5 N-linked (GlcNAc...) asparagine glycosylation sites follow: Asn-23, Asn-87, Asn-118, Asn-142, and Asn-246. Asp-310 is a catalytic residue. 8 N-linked (GlcNAc...) asparagine glycosylation sites follow: Asn-326, Asn-385, Asn-404, Asn-440, Asn-477, Asn-518, Asn-679, and Asn-701.

The protein belongs to the glycosyl hydrolase 3 family.

Its subcellular location is the secreted. It catalyses the reaction Hydrolysis of (1-&gt;4)-beta-D-xylans, to remove successive D-xylose residues from the non-reducing termini.. It functions in the pathway glycan degradation; xylan degradation. Its function is as follows. Xylan 1,4-beta-xylosidase involved in the hydrolysis of xylan, a major structural heterogeneous polysaccharide found in plant biomass representing the second most abundant polysaccharide in the biosphere, after cellulose. The chain is Probable exo-1,4-beta-xylosidase xlnD (xlnD) from Aspergillus fumigatus (strain ATCC MYA-4609 / CBS 101355 / FGSC A1100 / Af293) (Neosartorya fumigata).